Reading from the N-terminus, the 549-residue chain is Cation/acetate symporter ActP (549 aa).

A run of 13 helical transmembrane segments spans residues 33–53, 77–97, 103–123, 148–168, 183–203, 206–226, 262–282, 303–323, 355–375, 404–424, 428–448, 464–484, and 493–513; these read WQAI…TYWA, LAIA…ALVF, GLIY…LIAE, ILSA…QMVG, IAVV…GMLA, WVQI…AFMV, ISAL…PHIL, GFMG…IMLV, LFLG…VAGL, VSKI…VLFE, IAFM…PIIL, GGWL…TIWV, and IFPY…GIWL.

The protein belongs to the sodium:solute symporter (SSF) (TC 2.A.21) family.

Its subcellular location is the cell inner membrane. In terms of biological role, transports acetate. This Escherichia coli O1:K1 / APEC protein is Cation/acetate symporter ActP.